Consider the following 203-residue polypeptide: Kunitz trypsin inhibitor 6 (203 aa).

An N-terminal signal peptide occupies residues Met-1–Gly-21. Cys-70 and Cys-115 are oxidised to a cystine. N-linked (GlcNAc...) asparagine glycosylation is found at Asn-94, Asn-127, Asn-136, Asn-144, and Asn-197.

It belongs to the protease inhibitor I3 (leguminous Kunitz-type inhibitor) family.

Its function is as follows. Exhibits Kunitz trypsin protease inhibitor activity. The protein is Kunitz trypsin inhibitor 6 of Arabidopsis thaliana (Mouse-ear cress).